Reading from the N-terminus, the 115-residue chain is Somatostatin-1 (115 aa).

An N-terminal signal peptide occupies residues 1–24; sequence MLSCRFQCALVLLSLAVVFSKVSA. A propeptide spanning residues 25–88 is cleaved from the precursor; sequence APSDLRLRQL…QDEVRLELDR (64 aa). The segment at 65–95 is disordered; sequence NDALDSSDLSRGADQDEVRLELDRSANSSPL. The span at 75-88 shows a compositional bias: basic and acidic residues; sequence RGADQDEVRLELDR. The cysteines at positions 104 and 115 are disulfide-linked.

Belongs to the somatostatin family.

The protein resides in the secreted. Somatostatin inhibits the release of somatotropin. This is Somatostatin-1 (sst1) from Protopterus annectens (African lungfish).